Consider the following 186-residue polypeptide: tRNA (cytidine(56)-2'-O)-methyltransferase (186 aa).

S-adenosyl-L-methionine-binding positions include L84 and 110-114; that span reads GAEKV.

This sequence belongs to the aTrm56 family. Homodimer.

It is found in the cytoplasm. It catalyses the reaction cytidine(56) in tRNA + S-adenosyl-L-methionine = 2'-O-methylcytidine(56) in tRNA + S-adenosyl-L-homocysteine + H(+). Functionally, specifically catalyzes the AdoMet-dependent 2'-O-ribose methylation of cytidine at position 56 in tRNAs. This chain is tRNA (cytidine(56)-2'-O)-methyltransferase, found in Staphylothermus marinus (strain ATCC 43588 / DSM 3639 / JCM 9404 / F1).